Here is a 312-residue protein sequence, read N- to C-terminus: Large ribosomal subunit protein uL10 (312 aa).

Lys-14 participates in a covalent cross-link: Glycyl lysine isopeptide (Lys-Gly) (interchain with G-Cter in ubiquitin). Residue Ser-68 is modified to Phosphoserine. Residues Lys-97 and Lys-144 each participate in a glycyl lysine isopeptide (Lys-Gly) (interchain with G-Cter in ubiquitin) cross-link. The interval 199-230 (SSILDITDEELVSHFVSAVSTIASISLAIGYP) is interaction with P1A-P2B. The interval 231-258 (TLPSVGHTLINNYKDLLAVAIAASYHYP) is interaction with P1B-P2A. The segment covering 278–293 (PAATSAASGDAAPAEE) has biased composition (low complexity). A disordered region spans residues 278–312 (PAATSAASGDAAPAEEAAAEEEEESDDDMGFGLFD). Positions 294–306 (AAAEEEEESDDDM) are enriched in acidic residues. At Ser-302 the chain carries Phosphoserine; by CK2.

This sequence belongs to the universal ribosomal protein uL10 family. Component of the large ribosomal subunit (LSU). Mature yeast ribosomes consist of a small (40S) and a large (60S) subunit. The 40S small subunit contains 1 molecule of ribosomal RNA (18S rRNA) and 33 different proteins (encoded by 57 genes). The large 60S subunit contains 3 rRNA molecules (25S, 5.8S and 5S rRNA) and 46 different proteins (encoded by 81 genes). The 5 acidic ribosomal P-proteins form the stalk structure of the 60S subunit. They are organized as a pentameric complex in which uL10/P0 interacts with 2 heterodimers, P1A-P2B and P1B-P2A. uL10 directly interacts with 28S rRNA. uL10 interacts with YFL034W.

It localises to the cytoplasm. Component of the ribosome, a large ribonucleoprotein complex responsible for the synthesis of proteins in the cell. The small ribosomal subunit (SSU) binds messenger RNAs (mRNAs) and translates the encoded message by selecting cognate aminoacyl-transfer RNA (tRNA) molecules. The large subunit (LSU) contains the ribosomal catalytic site termed the peptidyl transferase center (PTC), which catalyzes the formation of peptide bonds, thereby polymerizing the amino acids delivered by tRNAs into a polypeptide chain. The nascent polypeptides leave the ribosome through a tunnel in the LSU and interact with protein factors that function in enzymatic processing, targeting, and the membrane insertion of nascent chains at the exit of the ribosomal tunnel. uL10 forms part of the P stalk that participates in recruiting G proteins to the ribosome. This Saccharomyces cerevisiae (strain ATCC 204508 / S288c) (Baker's yeast) protein is Large ribosomal subunit protein uL10.